Consider the following 236-residue polypeptide: tRNA (guanine-N(7)-)-methyltransferase (236 aa).

The S-adenosyl-L-methionine site is built by D35, E60, N87, and D113. The active site involves D113. Positions 117 and 149 each coordinate substrate.

It belongs to the class I-like SAM-binding methyltransferase superfamily. TrmB family.

The enzyme catalyses guanosine(46) in tRNA + S-adenosyl-L-methionine = N(7)-methylguanosine(46) in tRNA + S-adenosyl-L-homocysteine. It participates in tRNA modification; N(7)-methylguanine-tRNA biosynthesis. Its function is as follows. Catalyzes the formation of N(7)-methylguanine at position 46 (m7G46) in tRNA. The protein is tRNA (guanine-N(7)-)-methyltransferase of Prochlorococcus marinus (strain MIT 9303).